The sequence spans 367 residues: UDP-N-acetylglucosamine--N-acetylmuramyl-(pentapeptide) pyrophosphoryl-undecaprenol N-acetylglucosamine transferase (367 aa).

UDP-N-acetyl-alpha-D-glucosamine contacts are provided by residues 15 to 17, N127, R163, S191, I249, and Q294; that span reads TGG.

It belongs to the glycosyltransferase 28 family. MurG subfamily.

The protein localises to the cell inner membrane. The enzyme catalyses di-trans,octa-cis-undecaprenyl diphospho-N-acetyl-alpha-D-muramoyl-L-alanyl-D-glutamyl-meso-2,6-diaminopimeloyl-D-alanyl-D-alanine + UDP-N-acetyl-alpha-D-glucosamine = di-trans,octa-cis-undecaprenyl diphospho-[N-acetyl-alpha-D-glucosaminyl-(1-&gt;4)]-N-acetyl-alpha-D-muramoyl-L-alanyl-D-glutamyl-meso-2,6-diaminopimeloyl-D-alanyl-D-alanine + UDP + H(+). Its pathway is cell wall biogenesis; peptidoglycan biosynthesis. Its function is as follows. Cell wall formation. Catalyzes the transfer of a GlcNAc subunit on undecaprenyl-pyrophosphoryl-MurNAc-pentapeptide (lipid intermediate I) to form undecaprenyl-pyrophosphoryl-MurNAc-(pentapeptide)GlcNAc (lipid intermediate II). This chain is UDP-N-acetylglucosamine--N-acetylmuramyl-(pentapeptide) pyrophosphoryl-undecaprenol N-acetylglucosamine transferase, found in Burkholderia pseudomallei (strain 1106a).